A 529-amino-acid chain; its full sequence is MQQRRPVRRALLSVSDKAGIIEFAQALSARGVELLSTGGTARLLAEKGLPVTEVSDYTGFPEMMDGRVKTLHPKVHGGILGRRGQDDAIMEQHHIAPIDMVVVNLYPFAETVAREGCSLEDAVENIDIGGPTMVRSAAKNHKDVAIVVKSSDYDAIIKEMDANEGSLTLDTRFDLAIKAFEHTAAYDSMIANYFGSMVPAYHGESKEAAGRFPRTLNLNFIKKQDMRYGENSHQQAAFYIEENVKEASVATAQQVQGKALSYNNIADTDAALECVKEFNEPACVIVKHANPCGVAVSTTILDAYDRAYKTDPTSAFGGIIAFNRELDAETAQAIISRQFVEVIIAPSATEDALKITAAKQNVRVLTCGQWAQRVPGLDFKRVNGGLLVQDRDLGMVSEAELRVVSKRQPTEQELRDALFCWKVAKFVKSNAIVYAKENMTIGIGAGQMSRVYSAKIAGIKAADEGLEVKGSAMASDAFFPFRDGIDAAAAVGVSCVIQPGGSIRDDEVIAAADEHGIAMIFTDMRHFRH.

Residues 1 to 148 (MQQRRPVRRA…KNHKDVAIVV (148 aa)) enclose the MGS-like domain.

The protein belongs to the PurH family.

It carries out the reaction (6R)-10-formyltetrahydrofolate + 5-amino-1-(5-phospho-beta-D-ribosyl)imidazole-4-carboxamide = 5-formamido-1-(5-phospho-D-ribosyl)imidazole-4-carboxamide + (6S)-5,6,7,8-tetrahydrofolate. It catalyses the reaction IMP + H2O = 5-formamido-1-(5-phospho-D-ribosyl)imidazole-4-carboxamide. It participates in purine metabolism; IMP biosynthesis via de novo pathway; 5-formamido-1-(5-phospho-D-ribosyl)imidazole-4-carboxamide from 5-amino-1-(5-phospho-D-ribosyl)imidazole-4-carboxamide (10-formyl THF route): step 1/1. It functions in the pathway purine metabolism; IMP biosynthesis via de novo pathway; IMP from 5-formamido-1-(5-phospho-D-ribosyl)imidazole-4-carboxamide: step 1/1. The polypeptide is Bifunctional purine biosynthesis protein PurH (Salmonella paratyphi A (strain ATCC 9150 / SARB42)).